The following is a 375-amino-acid chain: 23S rRNA (uracil(747)-C(5))-methyltransferase RlmC (375 aa).

Residues Cys-3, Cys-11, Cys-14, and Cys-87 each contribute to the [4Fe-4S] cluster site. 4 residues coordinate S-adenosyl-L-methionine: Gln-212, Phe-241, Glu-262, and Asn-307. Cys-334 serves as the catalytic Nucleophile.

The protein belongs to the class I-like SAM-binding methyltransferase superfamily. RNA M5U methyltransferase family. RlmC subfamily.

It catalyses the reaction uridine(747) in 23S rRNA + S-adenosyl-L-methionine = 5-methyluridine(747) in 23S rRNA + S-adenosyl-L-homocysteine + H(+). Functionally, catalyzes the formation of 5-methyl-uridine at position 747 (m5U747) in 23S rRNA. This Salmonella typhi protein is 23S rRNA (uracil(747)-C(5))-methyltransferase RlmC.